A 348-amino-acid polypeptide reads, in one-letter code: Glucose 1-dehydrogenase 2 (348 aa).

Zn(2+) is bound at residue Cys39. Thr41 contacts substrate. Residues His64 and Glu65 each coordinate Zn(2+). Substrate-binding residues include Glu110 and Glu146. Zn(2+) is bound at residue Glu146. NADP(+)-binding positions include 178–181, 260–262, and 289–291; these read AGPV, LGV, and SVN. Asn291 serves as a coordination point for substrate.

It belongs to the zinc-containing alcohol dehydrogenase family. Glucose 1-dehydrogenase subfamily. Requires Zn(2+) as cofactor.

The catalysed reaction is D-glucose + NAD(+) = D-glucono-1,5-lactone + NADH + H(+). It catalyses the reaction D-glucose + NADP(+) = D-glucono-1,5-lactone + NADPH + H(+). Functionally, catalyzes the NAD(P)(+)-dependent oxidation of D-glucose to D-gluconate via gluconolactone. Can utilize both NAD(+) and NADP(+) as electron acceptor. Is involved in the degradation of glucose through a non-phosphorylative variant of the Entner-Doudoroff pathway. The chain is Glucose 1-dehydrogenase 2 from Vulcanisaeta moutnovskia (strain 768-28).